A 295-amino-acid chain; its full sequence is Ribosomal RNA small subunit methyltransferase A (295 aa).

Residues N29, L31, G56, E77, D102, and N127 each contribute to the S-adenosyl-L-methionine site.

It belongs to the class I-like SAM-binding methyltransferase superfamily. rRNA adenine N(6)-methyltransferase family. RsmA subfamily.

It localises to the cytoplasm. It carries out the reaction adenosine(1518)/adenosine(1519) in 16S rRNA + 4 S-adenosyl-L-methionine = N(6)-dimethyladenosine(1518)/N(6)-dimethyladenosine(1519) in 16S rRNA + 4 S-adenosyl-L-homocysteine + 4 H(+). Functionally, specifically dimethylates two adjacent adenosines (A1518 and A1519) in the loop of a conserved hairpin near the 3'-end of 16S rRNA in the 30S particle. May play a critical role in biogenesis of 30S subunits. The polypeptide is Ribosomal RNA small subunit methyltransferase A (Anoxybacillus flavithermus (strain DSM 21510 / WK1)).